Here is a 305-residue protein sequence, read N- to C-terminus: Acetylglutamate kinase (305 aa).

Substrate-binding positions include 78-79 (GG), Arg-100, and Asn-202.

The protein belongs to the acetylglutamate kinase family. ArgB subfamily.

The protein resides in the cytoplasm. The catalysed reaction is N-acetyl-L-glutamate + ATP = N-acetyl-L-glutamyl 5-phosphate + ADP. It participates in amino-acid biosynthesis; L-arginine biosynthesis; N(2)-acetyl-L-ornithine from L-glutamate: step 2/4. Functionally, catalyzes the ATP-dependent phosphorylation of N-acetyl-L-glutamate. The chain is Acetylglutamate kinase from Polaromonas sp. (strain JS666 / ATCC BAA-500).